A 132-amino-acid polypeptide reads, in one-letter code: UPF0329 protein ECU07_0050/ECU09_2020 (132 aa).

This sequence belongs to the UPF0329 family.

This chain is UPF0329 protein ECU07_0050/ECU09_2020, found in Encephalitozoon cuniculi (strain GB-M1) (Microsporidian parasite).